The sequence spans 154 residues: Prefoldin subunit 5 (154 aa).

Residue Ala2 is modified to N-acetylalanine. Lys42 carries the post-translational modification N6-acetyllysine. The residue at position 56 (Ser56) is a Phosphoserine.

Belongs to the prefoldin subunit alpha family. As to quaternary structure, heterohexamer of two PFD-alpha type and four PFD-beta type subunits.

The protein resides in the nucleus. Binds specifically to cytosolic chaperonin (c-CPN) and transfers target proteins to it. Binds to nascent polypeptide chain and promotes folding in an environment in which there are many competing pathways for nonnative proteins. Represses the transcriptional activity of MYC. This is Prefoldin subunit 5 (Pfdn5) from Mus musculus (Mouse).